Here is a 2273-residue protein sequence, read N- to C-terminus: Acetyl-CoA carboxylase, mitochondrial (2273 aa).

A mitochondrion-targeting transit peptide spans lysine 1–leucine 104. A Biotin carboxylation domain is found at valine 134–leucine 635. The ATP-grasp domain maps to lysine 292 to methionine 484. ATP is bound at residue glycine 332–glycine 337. The active site involves arginine 459. The Biotinyl-binding domain occupies leucine 763–threonine 837. Lysine 804 carries the N6-biotinyllysine modification. The 336-residue stretch at proline 1532 to glutamate 1867 folds into the CoA carboxyltransferase N-terminal domain. A carboxyltransferase region spans residues proline 1532–lysine 2187. Residues arginine 1776, lysine 2080, and arginine 2082 each coordinate CoA. Residues arginine 1871–lysine 2187 form the CoA carboxyltransferase C-terminal domain.

Requires biotin as cofactor.

It localises to the mitochondrion. It carries out the reaction hydrogencarbonate + acetyl-CoA + ATP = malonyl-CoA + ADP + phosphate + H(+). The enzyme catalyses N(6)-biotinyl-L-lysyl-[protein] + hydrogencarbonate + ATP = N(6)-carboxybiotinyl-L-lysyl-[protein] + ADP + phosphate + H(+). It functions in the pathway lipid metabolism; malonyl-CoA biosynthesis; malonyl-CoA from acetyl-CoA: step 1/1. Functionally, catalyzes the rate-limiting reaction in the mitochondrial fatty acid synthesis (FAS) type II pathway. Responsible for the production of the mitochondrial malonyl-CoA, used for the biosynthesis of the cofactor lipoic acid. This protein carries three functions: biotin carboxyl carrier protein, biotin carboxylase, and carboxyltransferase. This Saccharomyces cerevisiae (strain Lalvin EC1118 / Prise de mousse) (Baker's yeast) protein is Acetyl-CoA carboxylase, mitochondrial (HFA1).